The following is a 157-amino-acid chain: Cyclic pyranopterin monophosphate synthase (157 aa).

Substrate is bound by residues 74–76 (MCH) and 112–113 (ME). D127 is an active-site residue.

It belongs to the MoaC family. In terms of assembly, homohexamer; trimer of dimers.

It catalyses the reaction (8S)-3',8-cyclo-7,8-dihydroguanosine 5'-triphosphate = cyclic pyranopterin phosphate + diphosphate. It participates in cofactor biosynthesis; molybdopterin biosynthesis. Functionally, catalyzes the conversion of (8S)-3',8-cyclo-7,8-dihydroguanosine 5'-triphosphate to cyclic pyranopterin monophosphate (cPMP). This chain is Cyclic pyranopterin monophosphate synthase, found in Campylobacter jejuni subsp. jejuni serotype O:23/36 (strain 81-176).